The chain runs to 439 residues: Serine/threonine-protein kinase 2 (439 aa).

A Protein kinase domain is found at 87–439; the sequence is NDDFYHISTG…IFSDWINGGN (353 aa). Residues 93–101 and Lys117 contribute to the ATP site; that span reads ISTGGYGIV. Asp307 acts as the Proton acceptor in catalysis.

This sequence belongs to the protein kinase superfamily. Ser/Thr protein kinase family. Poxviruses subfamily. Phosphorylated in vivo. Autophosphorylated in vitro.

The protein localises to the host endoplasmic reticulum. Its subcellular location is the host endoplasmic reticulum-Golgi intermediate compartment. It carries out the reaction L-seryl-[protein] + ATP = O-phospho-L-seryl-[protein] + ADP + H(+). It catalyses the reaction L-threonyl-[protein] + ATP = O-phospho-L-threonyl-[protein] + ADP + H(+). In terms of biological role, essential serine-protein kinase involved in the early stage of virion morphogenesis. The sequence is that of Serine/threonine-protein kinase 2 (OPG054) from Vaccinia virus (strain Copenhagen) (VACV).